Consider the following 432-residue polypeptide: Adenylosuccinate synthetase (432 aa).

GTP is bound by residues Gly12 to Lys18 and Gly40 to Thr42. Residue Asp13 is the Proton acceptor of the active site. The Mg(2+) site is built by Asp13 and Gly40. IMP is bound by residues Asp13 to Lys16, Asn38 to His41, Thr128, Arg142, Gln223, Thr238, and Arg302. The active-site Proton donor is the His41. Thr298–Arg304 is a substrate binding site. GTP is bound by residues Arg304, Leu330–Asp332, and Ser412–Gly414.

It belongs to the adenylosuccinate synthetase family. In terms of assembly, homodimer. Mg(2+) is required as a cofactor.

The protein localises to the cytoplasm. It carries out the reaction IMP + L-aspartate + GTP = N(6)-(1,2-dicarboxyethyl)-AMP + GDP + phosphate + 2 H(+). Its pathway is purine metabolism; AMP biosynthesis via de novo pathway; AMP from IMP: step 1/2. In terms of biological role, plays an important role in the de novo pathway of purine nucleotide biosynthesis. Catalyzes the first committed step in the biosynthesis of AMP from IMP. This chain is Adenylosuccinate synthetase, found in Limosilactobacillus reuteri (strain DSM 20016) (Lactobacillus reuteri).